The sequence spans 463 residues: A-type ATP synthase subunit B (463 aa).

This sequence belongs to the ATPase alpha/beta chains family. In terms of assembly, has multiple subunits with at least A(3), B(3), C, D, E, F, H, I and proteolipid K(x).

The protein localises to the cell membrane. In terms of biological role, component of the A-type ATP synthase that produces ATP from ADP in the presence of a proton gradient across the membrane. The B chain is a regulatory subunit. This chain is A-type ATP synthase subunit B, found in Methanothermobacter thermautotrophicus (strain ATCC 29096 / DSM 1053 / JCM 10044 / NBRC 100330 / Delta H) (Methanobacterium thermoautotrophicum).